We begin with the raw amino-acid sequence, 266 residues long: tRNA pseudouridine synthase A (266 aa).

Asp-55 serves as the catalytic Nucleophile. Residue Tyr-110 participates in substrate binding.

It belongs to the tRNA pseudouridine synthase TruA family.

It catalyses the reaction uridine(38/39/40) in tRNA = pseudouridine(38/39/40) in tRNA. Formation of pseudouridine at positions 38, 39 and 40 in the anticodon stem and loop of transfer RNAs. This Thermococcus sibiricus (strain DSM 12597 / MM 739) protein is tRNA pseudouridine synthase A.